A 63-amino-acid chain; its full sequence is SERF-like protein C1705.02 (63 aa).

Positions 1–13 (MSRGNQRDVDRAR) are enriched in basic and acidic residues. The disordered stretch occupies residues 1 to 63 (MSRGNQRDVD…EANGGSKGKK (63 aa)). Basic residues predominate over residues 14 to 24 (NLKKSQASKKK). Basic and acidic residues predominate over residues 25–35 (QAGDPTKRLEA).

The protein belongs to the SERF family.

It is found in the cytoplasm. The protein localises to the nucleus. It localises to the nucleolus. This chain is SERF-like protein C1705.02, found in Schizosaccharomyces pombe (strain 972 / ATCC 24843) (Fission yeast).